Here is a 260-residue protein sequence, read N- to C-terminus: Proliferating cell nuclear antigen (260 aa).

A DNA-binding region spans residues 61 to 80 (RCDRNLSMGMNLGSMAKILK).

The protein belongs to the PCNA family. As to quaternary structure, homotrimer. Forms a complex with activator 1 heteropentamer in the presence of ATP. Interacts with E2f. Interacts with the catalytic subunits of two DNA polymerase complexes: PolD1 from the delta complex and PolE1/DNApol-epsilon255 from the epsilon complex. In terms of tissue distribution, expressed at high levels in adult ovary.

It is found in the nucleus. The protein localises to the chromosome. It localises to the cytoplasm. In terms of biological role, likely to be an auxiliary protein of DNA polymerase delta complex and is probably involved in the control of DNA replication and repair by increasing the polymerase's processibility. In Drosophila melanogaster (Fruit fly), this protein is Proliferating cell nuclear antigen.